Reading from the N-terminus, the 368-residue chain is tRNA-specific 2-thiouridylase MnmA (368 aa).

Residues 11–18 and methionine 37 each bind ATP; that span reads GMSGGVDS. Residues 97–99 form an interaction with target base in tRNA region; that stretch reads NPD. Cysteine 102 serves as the catalytic Nucleophile. A disulfide bridge connects residues cysteine 102 and cysteine 199. Glycine 127 provides a ligand contact to ATP. The tract at residues 149-151 is interaction with tRNA; that stretch reads KDQ. The active-site Cysteine persulfide intermediate is the cysteine 199. The segment at 311 to 312 is interaction with tRNA; that stretch reads RY.

The protein belongs to the MnmA/TRMU family. As to quaternary structure, interacts with TusE.

It localises to the cytoplasm. It carries out the reaction S-sulfanyl-L-cysteinyl-[protein] + uridine(34) in tRNA + AH2 + ATP = 2-thiouridine(34) in tRNA + L-cysteinyl-[protein] + A + AMP + diphosphate + H(+). In terms of biological role, catalyzes the 2-thiolation of uridine at the wobble position (U34) of tRNA(Lys), tRNA(Glu) and tRNA(Gln), leading to the formation of s(2)U34, the first step of tRNA-mnm(5)s(2)U34 synthesis. Sulfur is provided by IscS, via a sulfur-relay system. Binds ATP and its substrate tRNAs. The polypeptide is tRNA-specific 2-thiouridylase MnmA (Escherichia coli O157:H7).